A 122-amino-acid polypeptide reads, in one-letter code: Spermidine export protein MdtJ (122 aa).

4 helical membrane passes run M1–M21, T31–V51, V54–F74, and E81–V101.

This sequence belongs to the drug/metabolite transporter (DMT) superfamily. Small multidrug resistance (SMR) (TC 2.A.7.1) family. MdtJ subfamily. As to quaternary structure, forms a complex with MdtI.

It is found in the cell inner membrane. In terms of biological role, catalyzes the excretion of spermidine. This Serratia proteamaculans (strain 568) protein is Spermidine export protein MdtJ.